Consider the following 1876-residue polypeptide: Mediator of RNA polymerase II transcription subunit 12 (1876 aa).

The span at 1–10 shows a compositional bias: low complexity; it reads MLRSGAASAS. Disordered regions lie at residues 1–75, 291–314, 715–737, 1373–1405, and 1801–1876; these read MLRS…DMSQ, TATASPAPVSPSTHLPRTPSAAPS, PSASSATEQHQNPDGSVQTPSSV, STDADKTPRRMDNSHKGMTNFGPDDGADAPAQA, and LPCR…SKRD. The segment covering 1373 to 1387 has biased composition (basic and acidic residues); that stretch reads STDADKTPRRMDNSH. The segment covering 1394-1405 has biased composition (low complexity); it reads GPDDGADAPAQA. Positions 1867–1876 are enriched in basic residues; it reads SRKRRLSKRD.

It belongs to the Mediator complex subunit 12 family. Component of the SRB8-11 complex, which itself associates with the Mediator complex.

It localises to the nucleus. In terms of biological role, component of the SRB8-11 complex. The SRB8-11 complex is a regulatory module of the Mediator complex which is itself involved in regulation of basal and activated RNA polymerase II-dependent transcription. The SRB8-11 complex may be involved in the transcriptional repression of a subset of genes regulated by Mediator. It may inhibit the association of the Mediator complex with RNA polymerase II to form the holoenzyme complex. The polypeptide is Mediator of RNA polymerase II transcription subunit 12 (SRB8) (Mycosarcoma maydis (Corn smut fungus)).